The sequence spans 133 residues: Small ribosomal subunit protein uS8 (133 aa).

Belongs to the universal ribosomal protein uS8 family. As to quaternary structure, part of the 30S ribosomal subunit.

One of the primary rRNA binding proteins, it binds directly to 16S rRNA central domain where it helps coordinate assembly of the platform of the 30S subunit. This is Small ribosomal subunit protein uS8 from Saccharolobus solfataricus (strain ATCC 35092 / DSM 1617 / JCM 11322 / P2) (Sulfolobus solfataricus).